A 128-amino-acid polypeptide reads, in one-letter code: U24-ctenitoxin-Pn1a (128 aa).

2 Thyroglobulin type-1 domains span residues 4–67 (KSDC…ECGC) and 72–127 (KERK…SLKC). Cystine bridges form between C7–C27, C38–C45, C47–C67, and C107–C127.

Expressed by the venom gland.

It is found in the secreted. Its function is as follows. Cysteine proteinase inhibitor. This Phoneutria nigriventer (Brazilian armed spider) protein is U24-ctenitoxin-Pn1a.